The sequence spans 266 residues: Protein SCO2 homolog, mitochondrial (266 aa).

A mitochondrion-targeting transit peptide spans M1–Q41. The Mitochondrial matrix portion of the chain corresponds to G42–R60. Residues L61–L78 form a helical membrane-spanning segment. Residues R79–S266 are Mitochondrial intermembrane-facing. Positions L85–A259 constitute a Thioredoxin domain. Cu cation-binding residues include C133, C137, and H224. C133 and C137 form a disulfide bridge.

Belongs to the SCO1/2 family. In terms of assembly, homodimer. Interacts with COA6. Found in a complex with TMEM177, COX20, COA6, MT-CO2/COX2, COX18 and SCO1. Interacts with TMEM177 in a COX20-dependent manner. Interacts with COX20 in a MT-CO2/COX2- and COX18-dependent manner. Interacts with COX16. In terms of tissue distribution, ubiquitous.

It is found in the mitochondrion inner membrane. Functionally, copper metallochaperone essential for the synthesis and maturation of cytochrome c oxidase subunit II (MT-CO2/COX2) by facilitating the incorporation of copper into the Cu(A) site of MT-CO2/COX2. Could also act as a thiol-disulfide oxidoreductase to regulate the redox state of the cysteines in SCO1 during maturation of MT-CO2/COX2. This Homo sapiens (Human) protein is Protein SCO2 homolog, mitochondrial (SCO2).